Here is a 133-residue protein sequence, read N- to C-terminus: Holo-[acyl-carrier-protein] synthase (133 aa).

2 residues coordinate Mg(2+): Asp-8 and Glu-64.

This sequence belongs to the P-Pant transferase superfamily. AcpS family. Requires Mg(2+) as cofactor.

It is found in the cytoplasm. The enzyme catalyses apo-[ACP] + CoA = holo-[ACP] + adenosine 3',5'-bisphosphate + H(+). Its function is as follows. Transfers the 4'-phosphopantetheine moiety from coenzyme A to a Ser of acyl-carrier-protein. The polypeptide is Holo-[acyl-carrier-protein] synthase (Shewanella loihica (strain ATCC BAA-1088 / PV-4)).